Reading from the N-terminus, the 284-residue chain is 4-diphosphocytidyl-2-C-methyl-D-erythritol kinase (284 aa).

K10 is a catalytic residue. 92 to 102 (PYGAGLGSGSS) contributes to the ATP binding site. Residue D134 is part of the active site.

The protein belongs to the GHMP kinase family. IspE subfamily.

The enzyme catalyses 4-CDP-2-C-methyl-D-erythritol + ATP = 4-CDP-2-C-methyl-D-erythritol 2-phosphate + ADP + H(+). It participates in isoprenoid biosynthesis; isopentenyl diphosphate biosynthesis via DXP pathway; isopentenyl diphosphate from 1-deoxy-D-xylulose 5-phosphate: step 3/6. Catalyzes the phosphorylation of the position 2 hydroxy group of 4-diphosphocytidyl-2C-methyl-D-erythritol. In Salinibacter ruber (strain DSM 13855 / M31), this protein is 4-diphosphocytidyl-2-C-methyl-D-erythritol kinase.